Reading from the N-terminus, the 300-residue chain is Ribonuclease HIII (300 aa).

The 215-residue stretch at 86–300 folds into the RNase H type-2 domain; the sequence is RPRLGVDESG…FNEICDSASA (215 aa). Residues D92, E93, and D196 each contribute to the a divalent metal cation site.

The protein belongs to the RNase HII family. RnhC subfamily. Mn(2+) serves as cofactor. The cofactor is Mg(2+).

The protein localises to the cytoplasm. It carries out the reaction Endonucleolytic cleavage to 5'-phosphomonoester.. Endonuclease that specifically degrades the RNA of RNA-DNA hybrids. The chain is Ribonuclease HIII from Chlamydia felis (strain Fe/C-56) (Chlamydophila felis).